Consider the following 61-residue polypeptide: MRYIIAFIWTFLLSHMACYLVASMNSVTYNFKTSSVIAVVLYVLIMVLAEIMPMNKNASQH.

The next 2 membrane-spanning stretches (helical) occupy residues 4 to 24 and 34 to 54; these read IIAF…VASM and SSVI…IMPM.

It is found in the cell membrane. This is an uncharacterized protein from Bacillus subtilis (strain 168).